The sequence spans 119 residues: Putative membrane protein insertion efficiency factor (119 aa).

The protein belongs to the UPF0161 family.

The protein localises to the cell inner membrane. Could be involved in insertion of integral membrane proteins into the membrane. This Agrobacterium fabrum (strain C58 / ATCC 33970) (Agrobacterium tumefaciens (strain C58)) protein is Putative membrane protein insertion efficiency factor.